A 370-amino-acid polypeptide reads, in one-letter code: Cysteine synthase 1 (370 aa).

A mitochondrion-targeting transit peptide spans 1 to 16; the sequence is MFRQSVRRFATAALRS. Lys73 carries the post-translational modification N6-(pyridoxal phosphate)lysine. Residues Asn103, 209-213, and Ser308 contribute to the pyridoxal 5'-phosphate site; that span reads GTGGT.

The protein belongs to the cysteine synthase/cystathionine beta-synthase family. It depends on pyridoxal 5'-phosphate as a cofactor.

It localises to the mitochondrion. It carries out the reaction O-succinyl-L-serine + hydrogen sulfide = L-cysteine + succinate. The enzyme catalyses O-acetyl-L-serine + hydrogen sulfide = L-cysteine + acetate. Its pathway is amino-acid biosynthesis; L-cysteine biosynthesis; L-cysteine from L-serine: step 2/2. In terms of biological role, catalyzes the conversion of O-succinyl-L-serine into cysteine, the last step in the cysteine biosynthesis pathway. Can also use O-acetyl-L-serine. The sequence is that of Cysteine synthase 1 from Emericella nidulans (strain FGSC A4 / ATCC 38163 / CBS 112.46 / NRRL 194 / M139) (Aspergillus nidulans).